The sequence spans 282 residues: HTH-type transcriptional activator RhaR (282 aa).

Positions 179 to 277 constitute an HTH araC/xylS-type domain; the sequence is DKLITALANS…GMTPSQWRHL (99 aa). DNA-binding regions (H-T-H motif) lie at residues 196–217 and 244–267; these read DAFCQQEQCSERVLRQQFRAQT and ISEISMQCGFEDSNYFSVVFTRET.

Binds DNA as a dimer.

The protein resides in the cytoplasm. Its function is as follows. Activates expression of the rhaSR operon in response to L-rhamnose. The polypeptide is HTH-type transcriptional activator RhaR (Salmonella schwarzengrund (strain CVM19633)).